A 504-amino-acid chain; its full sequence is Histidine ammonia-lyase (504 aa).

Positions 142–144 (ASG) form a cross-link, 5-imidazolinone (Ala-Gly). At Ser-143 the chain carries 2,3-didehydroalanine (Ser).

This sequence belongs to the PAL/histidase family. In terms of processing, contains an active site 4-methylidene-imidazol-5-one (MIO), which is formed autocatalytically by cyclization and dehydration of residues Ala-Ser-Gly.

The protein localises to the cytoplasm. It carries out the reaction L-histidine = trans-urocanate + NH4(+). It functions in the pathway amino-acid degradation; L-histidine degradation into L-glutamate; N-formimidoyl-L-glutamate from L-histidine: step 1/3. The polypeptide is Histidine ammonia-lyase (Staphylococcus aureus (strain MRSA252)).